Consider the following 292-residue polypeptide: MKDRLPELKQRTKETELSKDKDVPTTEAEEQGVFLQQAVIYEREPVAERHLHEIQKLQESINNLTDNVQKFGQQQKSLVASMRRFSLLKKESSIAKEIKIQAEHINRGLDDLVKEVKKSEDESGPSSVVTRILKFQHAAMFRHFQQTMFTYNDTIAAKQEKCRTFIFRQLEVAGKELPEEEVNDMLHQGKWEVFNESLLTEISITKAQLSEIEQRHKELVNLENQIKDLRDLFIQISLLVEEQGESVNSIEMIVNGTKEYVNTTKEKFGLAVKYKKRNPCKILCCWCCPCCG.

Residues 1–24 (MKDRLPELKQRTKETELSKDKDVP) are compositionally biased toward basic and acidic residues. The tract at residues 1 to 28 (MKDRLPELKQRTKETELSKDKDVPTTEA) is disordered. Residues 46 to 122 (VAERHLHEIQ…VKEVKKSEDE (77 aa)) adopt a coiled-coil conformation. One can recognise a t-SNARE coiled-coil homology domain in the interval 209 to 271 (LSEIEQRHKE…NTTKEKFGLA (63 aa)).

The protein belongs to the syntaxin family. Interacts with EGFR.

It localises to the cell membrane. It is found in the cytoplasm. Plays a role in endosomal trafficking of the epidermal growth factor receptor (EGFR). The protein is Syntaxin-19 (STX19) of Bos taurus (Bovine).